The sequence spans 211 residues: Uracil phosphoribosyltransferase (211 aa).

5-phospho-alpha-D-ribose 1-diphosphate contacts are provided by residues Arg-78, Arg-103, and 130 to 138; that span reads DPMLATGGT. Residues Ile-195 and 200–202 each bind uracil; that span reads GDA. 5-phospho-alpha-D-ribose 1-diphosphate is bound at residue Asp-201.

This sequence belongs to the UPRTase family. Requires Mg(2+) as cofactor.

The enzyme catalyses UMP + diphosphate = 5-phospho-alpha-D-ribose 1-diphosphate + uracil. The protein operates within pyrimidine metabolism; UMP biosynthesis via salvage pathway; UMP from uracil: step 1/1. With respect to regulation, allosterically activated by GTP. Catalyzes the conversion of uracil and 5-phospho-alpha-D-ribose 1-diphosphate (PRPP) to UMP and diphosphate. In Paenarthrobacter aurescens (strain TC1), this protein is Uracil phosphoribosyltransferase.